Consider the following 447-residue polypeptide: UPF0210 protein LBUL_0934 (447 aa).

It belongs to the UPF0210 family. Homodimer.

This is UPF0210 protein LBUL_0934 from Lactobacillus delbrueckii subsp. bulgaricus (strain ATCC BAA-365 / Lb-18).